We begin with the raw amino-acid sequence, 508 residues long: Photosystem II CP47 reaction center protein (508 aa).

Transmembrane regions (helical) follow at residues 21 to 36, 101 to 115, 140 to 156, 203 to 218, 237 to 252, and 457 to 472; these read SVHI…WAGS, IMFS…IWHW, GIHL…FGAF, IAAG…FHLS, VLSS…AFIV, and TFAL…HGAR.

This sequence belongs to the PsbB/PsbC family. PsbB subfamily. PSII is composed of 1 copy each of membrane proteins PsbA, PsbB, PsbC, PsbD, PsbE, PsbF, PsbH, PsbI, PsbJ, PsbK, PsbL, PsbM, PsbT, PsbX, PsbY, PsbZ, Psb30/Ycf12, at least 3 peripheral proteins of the oxygen-evolving complex and a large number of cofactors. It forms dimeric complexes. Binds multiple chlorophylls. PSII binds additional chlorophylls, carotenoids and specific lipids. is required as a cofactor.

The protein localises to the plastid. It localises to the chloroplast thylakoid membrane. Functionally, one of the components of the core complex of photosystem II (PSII). It binds chlorophyll and helps catalyze the primary light-induced photochemical processes of PSII. PSII is a light-driven water:plastoquinone oxidoreductase, using light energy to abstract electrons from H(2)O, generating O(2) and a proton gradient subsequently used for ATP formation. In Pinus koraiensis (Korean pine), this protein is Photosystem II CP47 reaction center protein.